A 229-amino-acid polypeptide reads, in one-letter code: Vitellogenin (229 aa).

Residues 1 to 136 (IVMLKNDNVE…SWILAAESCR (136 aa)) enclose the VWFD domain. Asn198 carries an N-linked (GlcNAc...) asparagine glycan.

As to expression, expressed in liver, ovary and, to a lesser extent, in muscle, intestine, skin, kidney and heart.

Functionally, precursor of the egg-yolk proteins that are sources of nutrients during early development of oviparous organisms. In terms of biological role, probably binds tetrodotoxin in the ovary. In Takifugu pardalis (Panther puffer), this protein is Vitellogenin.